Here is a 121-residue protein sequence, read N- to C-terminus: Large ribosomal subunit protein uL24 (121 aa).

Belongs to the universal ribosomal protein uL24 family. In terms of assembly, part of the 50S ribosomal subunit.

Its function is as follows. One of two assembly initiator proteins, it binds directly to the 5'-end of the 23S rRNA, where it nucleates assembly of the 50S subunit. Functionally, located at the polypeptide exit tunnel on the outside of the subunit. The protein is Large ribosomal subunit protein uL24 of Methanocorpusculum labreanum (strain ATCC 43576 / DSM 4855 / Z).